The primary structure comprises 187 residues: Protein GrpE (187 aa).

A compositionally biased stretch (basic and acidic residues) spans 1-15; it reads MKETKQEEMEVREDC. The segment at 1-40 is disordered; that stretch reads MKETKQEEMEVREDCESVDSNLEATVEEMESTKGTSEDLE.

This sequence belongs to the GrpE family. Homodimer.

It localises to the cytoplasm. Functionally, participates actively in the response to hyperosmotic and heat shock by preventing the aggregation of stress-denatured proteins, in association with DnaK and GrpE. It is the nucleotide exchange factor for DnaK and may function as a thermosensor. Unfolded proteins bind initially to DnaJ; upon interaction with the DnaJ-bound protein, DnaK hydrolyzes its bound ATP, resulting in the formation of a stable complex. GrpE releases ADP from DnaK; ATP binding to DnaK triggers the release of the substrate protein, thus completing the reaction cycle. Several rounds of ATP-dependent interactions between DnaJ, DnaK and GrpE are required for fully efficient folding. This chain is Protein GrpE, found in Alkaliphilus oremlandii (strain OhILAs) (Clostridium oremlandii (strain OhILAs)).